The following is a 190-amino-acid chain: UPF0200 protein MTH_434 (190 aa).

10–17 (GMPGAGKG) provides a ligand contact to ATP.

Belongs to the UPF0200 family.

This chain is UPF0200 protein MTH_434, found in Methanothermobacter thermautotrophicus (strain ATCC 29096 / DSM 1053 / JCM 10044 / NBRC 100330 / Delta H) (Methanobacterium thermoautotrophicum).